The following is a 39-amino-acid chain: Cytochrome b559 subunit beta (39 aa).

A helical membrane pass occupies residues 14 to 30 (WLAVHGLAVPTVFFLGS). Heme is bound at residue His18.

Belongs to the PsbE/PsbF family. As to quaternary structure, heterodimer of an alpha subunit and a beta subunit. PSII is composed of 1 copy each of membrane proteins PsbA, PsbB, PsbC, PsbD, PsbE, PsbF, PsbH, PsbI, PsbJ, PsbK, PsbL, PsbM, PsbT, PsbX, PsbY, PsbZ, Psb30/Ycf12, at least 3 peripheral proteins of the oxygen-evolving complex and a large number of cofactors. It forms dimeric complexes. The cofactor is heme b.

The protein localises to the plastid. The protein resides in the chloroplast thylakoid membrane. This b-type cytochrome is tightly associated with the reaction center of photosystem II (PSII). PSII is a light-driven water:plastoquinone oxidoreductase that uses light energy to abstract electrons from H(2)O, generating O(2) and a proton gradient subsequently used for ATP formation. It consists of a core antenna complex that captures photons, and an electron transfer chain that converts photonic excitation into a charge separation. This chain is Cytochrome b559 subunit beta, found in Pinus koraiensis (Korean pine).